Reading from the N-terminus, the 110-residue chain is Large ribosomal subunit protein uL22 (110 aa).

Belongs to the universal ribosomal protein uL22 family. Part of the 50S ribosomal subunit.

Its function is as follows. This protein binds specifically to 23S rRNA; its binding is stimulated by other ribosomal proteins, e.g. L4, L17, and L20. It is important during the early stages of 50S assembly. It makes multiple contacts with different domains of the 23S rRNA in the assembled 50S subunit and ribosome. In terms of biological role, the globular domain of the protein is located near the polypeptide exit tunnel on the outside of the subunit, while an extended beta-hairpin is found that lines the wall of the exit tunnel in the center of the 70S ribosome. In Buchnera aphidicola subsp. Acyrthosiphon pisum (strain 5A), this protein is Large ribosomal subunit protein uL22.